We begin with the raw amino-acid sequence, 121 residues long: Large ribosomal subunit protein uL22 (121 aa).

The protein belongs to the universal ribosomal protein uL22 family. In terms of assembly, part of the 50S ribosomal subunit.

Functionally, this protein binds specifically to 23S rRNA; its binding is stimulated by other ribosomal proteins, e.g. L4, L17, and L20. It is important during the early stages of 50S assembly. It makes multiple contacts with different domains of the 23S rRNA in the assembled 50S subunit and ribosome. The globular domain of the protein is located near the polypeptide exit tunnel on the outside of the subunit, while an extended beta-hairpin is found that lines the wall of the exit tunnel in the center of the 70S ribosome. This Parasynechococcus marenigrum (strain WH8102) protein is Large ribosomal subunit protein uL22.